Here is a 79-residue protein sequence, read N- to C-terminus: CDC42 small effector protein 1 (79 aa).

Residues cysteine 10 and cysteine 11 are each lipidated (S-palmitoyl cysteine). The CRIB domain occupies 30 to 43; sequence IGEPMNFVHLTHIG. The tract at residues 41-79 is disordered; sequence HIGSGDMGASDGLPRAGGVQEQMRSKCGRDRQWSNSGVL. A compositionally biased stretch (basic and acidic residues) spans 63–72; sequence MRSKCGRDRQ.

The protein belongs to the CDC42SE/SPEC family.

It is found in the cytoplasm. The protein resides in the cytoskeleton. Its subcellular location is the cell membrane. Probably involved in the organization of the actin cytoskeleton by acting downstream of CDC42, inducing actin filament assembly. The polypeptide is CDC42 small effector protein 1 (cdc42se1) (Xenopus tropicalis (Western clawed frog)).